Here is a 79-residue protein sequence, read N- to C-terminus: uncharacterized protein (79 aa).

Residues 1–27 (MRQRGQEHLPTSVKSEPRACNNPTVAE) form a disordered region.

This is an uncharacterized protein from Homo sapiens (Human).